A 159-amino-acid polypeptide reads, in one-letter code: Ribosome-binding factor A (159 aa).

Composition is skewed to basic and acidic residues over residues 118–128 and 137–146; these read AADDEVAKARE and DPYKEPRVAS. The interval 118–159 is disordered; that stretch reads AADDEVAKARENAQPAGDADPYKEPRVASDEDEASPDVREAD.

This sequence belongs to the RbfA family. In terms of assembly, monomer. Binds 30S ribosomal subunits, but not 50S ribosomal subunits or 70S ribosomes.

It localises to the cytoplasm. In terms of biological role, one of several proteins that assist in the late maturation steps of the functional core of the 30S ribosomal subunit. Associates with free 30S ribosomal subunits (but not with 30S subunits that are part of 70S ribosomes or polysomes). Required for efficient processing of 16S rRNA. May interact with the 5'-terminal helix region of 16S rRNA. This Rhodococcus erythropolis (strain PR4 / NBRC 100887) protein is Ribosome-binding factor A.